The sequence spans 226 residues: MPTPSSGLSCNGVAVGPVLRANDLAFSRGGRPVFTGIDFSVSAGGVIQVVGPNGSGKSSLLRVLSGLLQPASGSVSWLGKCVRAGDPAYLQSLAYVGHADGIDTDLTADEHLRYAARLTGLHATNETVRVALARLGIAKTMHVPIRTLSQGQRRRVALARLALVWRALWLLDEPLTSLDDESAACFHDLLDEHLRDGGMAVIATHRLLPGGGEVLQLGGAHALPPA.

In terms of domain architecture, ABC transporter spans 19-226 (LRANDLAFSR…LGGAHALPPA (208 aa)). 51-58 (GPNGSGKS) serves as a coordination point for ATP.

Belongs to the ABC transporter superfamily. CcmA exporter (TC 3.A.1.107) family. As to quaternary structure, the complex is composed of two ATP-binding proteins (CcmA) and two transmembrane proteins (CcmB).

The protein localises to the cell inner membrane. The catalysed reaction is heme b(in) + ATP + H2O = heme b(out) + ADP + phosphate + H(+). In terms of biological role, part of the ABC transporter complex CcmAB involved in the biogenesis of c-type cytochromes; once thought to export heme, this seems not to be the case, but its exact role is uncertain. Responsible for energy coupling to the transport system. The sequence is that of Cytochrome c biogenesis ATP-binding export protein CcmA from Cupriavidus pinatubonensis (strain JMP 134 / LMG 1197) (Cupriavidus necator (strain JMP 134)).